Here is a 1700-residue protein sequence, read N- to C-terminus: uncharacterized protein (1700 aa).

The chain crosses the membrane as a helical span at residues 986 to 1006; sequence APITQYPVLCYLLYLLSYYLV. 2 coiled-coil regions span residues 1246–1278 and 1657–1684; these read DQNA…REIK and QDMD…IEGD. Positions 1650-1700 are disordered; the sequence is DTEPDIMQDMDGEPQEADELEDLKEEAESLDIEGDYFAEEDEDYAQEDFIE. Residues 1651 to 1700 are compositionally biased toward acidic residues; sequence TEPDIMQDMDGEPQEADELEDLKEEAESLDIEGDYFAEEDEDYAQEDFIE.

It localises to the host membrane. Its subcellular location is the virion. This is an uncharacterized protein from Acanthamoeba polyphaga (Amoeba).